The sequence spans 349 residues: Holliday junction branch migration complex subunit RuvB (349 aa).

The interval 1–181 is large ATPase domain (RuvB-L); sequence MDDRILTSVN…FGVLCPMEFY (181 aa). ATP contacts are provided by residues leucine 20, arginine 21, glycine 62, lysine 65, threonine 66, threonine 67, 128 to 130, arginine 171, tyrosine 181, and arginine 218; that span reads EDY. Threonine 66 contacts Mg(2+). A small ATPAse domain (RuvB-S) region spans residues 182–252; sequence NDEELKEIIV…SAKKALNLLE (71 aa). A head domain (RuvB-H) region spans residues 255–349; sequence DEGFDSIDNK…DQCSFFKKEK (95 aa). Positions 310 and 315 each coordinate DNA.

The protein belongs to the RuvB family. Homohexamer. Forms an RuvA(8)-RuvB(12)-Holliday junction (HJ) complex. HJ DNA is sandwiched between 2 RuvA tetramers; dsDNA enters through RuvA and exits via RuvB. An RuvB hexamer assembles on each DNA strand where it exits the tetramer. Each RuvB hexamer is contacted by two RuvA subunits (via domain III) on 2 adjacent RuvB subunits; this complex drives branch migration. In the full resolvosome a probable DNA-RuvA(4)-RuvB(12)-RuvC(2) complex forms which resolves the HJ.

It localises to the cytoplasm. It catalyses the reaction ATP + H2O = ADP + phosphate + H(+). In terms of biological role, the RuvA-RuvB-RuvC complex processes Holliday junction (HJ) DNA during genetic recombination and DNA repair, while the RuvA-RuvB complex plays an important role in the rescue of blocked DNA replication forks via replication fork reversal (RFR). RuvA specifically binds to HJ cruciform DNA, conferring on it an open structure. The RuvB hexamer acts as an ATP-dependent pump, pulling dsDNA into and through the RuvAB complex. RuvB forms 2 homohexamers on either side of HJ DNA bound by 1 or 2 RuvA tetramers; 4 subunits per hexamer contact DNA at a time. Coordinated motions by a converter formed by DNA-disengaged RuvB subunits stimulates ATP hydrolysis and nucleotide exchange. Immobilization of the converter enables RuvB to convert the ATP-contained energy into a lever motion, pulling 2 nucleotides of DNA out of the RuvA tetramer per ATP hydrolyzed, thus driving DNA branch migration. The RuvB motors rotate together with the DNA substrate, which together with the progressing nucleotide cycle form the mechanistic basis for DNA recombination by continuous HJ branch migration. Branch migration allows RuvC to scan DNA until it finds its consensus sequence, where it cleaves and resolves cruciform DNA. This chain is Holliday junction branch migration complex subunit RuvB, found in Clostridium acetobutylicum (strain ATCC 824 / DSM 792 / JCM 1419 / IAM 19013 / LMG 5710 / NBRC 13948 / NRRL B-527 / VKM B-1787 / 2291 / W).